We begin with the raw amino-acid sequence, 713 residues long: Methionine--tRNA ligase (713 aa).

The 'HIGH' region signature appears at 31–41 (PYANGSIHLGH). Cysteine 162, cysteine 165, cysteine 175, and cysteine 178 together coordinate Zn(2+). The short motif at 348–352 (KMSKS) is the 'KMSKS' region element. Lysine 351 serves as a coordination point for ATP. The region spanning 609–713 (DFAKIDLRIV…DGAKAGMRVK (105 aa)) is the tRNA-binding domain.

The protein belongs to the class-I aminoacyl-tRNA synthetase family. MetG type 1 subfamily. As to quaternary structure, homodimer. Zn(2+) is required as a cofactor.

It localises to the cytoplasm. It carries out the reaction tRNA(Met) + L-methionine + ATP = L-methionyl-tRNA(Met) + AMP + diphosphate. Its function is as follows. Is required not only for elongation of protein synthesis but also for the initiation of all mRNA translation through initiator tRNA(fMet) aminoacylation. This chain is Methionine--tRNA ligase, found in Colwellia psychrerythraea (strain 34H / ATCC BAA-681) (Vibrio psychroerythus).